Reading from the N-terminus, the 202-residue chain is Protein-methionine-sulfoxide reductase heme-binding subunit MsrQ (202 aa).

Transmembrane regions (helical) follow at residues 8–28 (LAVFLGALAMPAWWLYQAWIF), 42–62 (LGLGALVLLLLTLAMTPLQKL), 75–95 (LGLWCFTYALLHLSAYCVFIL), 110–130 (PYIIVGMLGFICLFLLAITSN), 147–167 (LVYLILGLGLLHMLWVVRADL), and 169–189 (EWTLYAVVGASLMLLRLPSIA).

The protein belongs to the MsrQ family. In terms of assembly, heterodimer of a catalytic subunit (MsrP) and a heme-binding subunit (MsrQ). FMN serves as cofactor. Heme b is required as a cofactor.

It is found in the cell inner membrane. Part of the MsrPQ system that repairs oxidized periplasmic proteins containing methionine sulfoxide residues (Met-O), using respiratory chain electrons. Thus protects these proteins from oxidative-stress damage caused by reactive species of oxygen and chlorine generated by the host defense mechanisms. MsrPQ is essential for the maintenance of envelope integrity under bleach stress, rescuing a wide series of structurally unrelated periplasmic proteins from methionine oxidation. MsrQ provides electrons for reduction to the reductase catalytic subunit MsrP, using the quinone pool of the respiratory chain. In Pseudomonas paraeruginosa (strain DSM 24068 / PA7) (Pseudomonas aeruginosa (strain PA7)), this protein is Protein-methionine-sulfoxide reductase heme-binding subunit MsrQ.